We begin with the raw amino-acid sequence, 65 residues long: Small ribosomal subunit protein eS27 (65 aa).

Residues Cys-20, Cys-23, Cys-39, and Cys-42 each contribute to the Zn(2+) site. A C4-type zinc finger spans residues 20-42 (CIDCGNEQIVFSNPATTVRCLVC).

Belongs to the eukaryotic ribosomal protein eS27 family. As to quaternary structure, part of the 30S ribosomal subunit. Zn(2+) is required as a cofactor.

The polypeptide is Small ribosomal subunit protein eS27 (Thermococcus onnurineus (strain NA1)).